A 330-amino-acid polypeptide reads, in one-letter code: Ketol-acid reductoisomerase (NADP(+)) (330 aa).

The KARI N-terminal Rossmann domain maps to 3 to 184 (LPVYYDKDID…GGGRMGVLET (182 aa)). NADP(+) is bound by residues 26–29 (YGAQ), serine 52, and serine 54. Histidine 109 is an active-site residue. An NADP(+)-binding site is contributed by glycine 135. Residues 185–329 (SFKEECESDL…EILRAPFNHK (145 aa)) form the KARI C-terminal knotted domain. Mg(2+) contacts are provided by aspartate 193, glutamate 197, glutamate 229, and glutamate 233. Serine 254 serves as a coordination point for substrate.

It belongs to the ketol-acid reductoisomerase family. Requires Mg(2+) as cofactor.

It catalyses the reaction (2R)-2,3-dihydroxy-3-methylbutanoate + NADP(+) = (2S)-2-acetolactate + NADPH + H(+). The catalysed reaction is (2R,3R)-2,3-dihydroxy-3-methylpentanoate + NADP(+) = (S)-2-ethyl-2-hydroxy-3-oxobutanoate + NADPH + H(+). The protein operates within amino-acid biosynthesis; L-isoleucine biosynthesis; L-isoleucine from 2-oxobutanoate: step 2/4. It functions in the pathway amino-acid biosynthesis; L-valine biosynthesis; L-valine from pyruvate: step 2/4. In terms of biological role, involved in the biosynthesis of branched-chain amino acids (BCAA). Catalyzes an alkyl-migration followed by a ketol-acid reduction of (S)-2-acetolactate (S2AL) to yield (R)-2,3-dihydroxy-isovalerate. In the isomerase reaction, S2AL is rearranged via a Mg-dependent methyl migration to produce 3-hydroxy-3-methyl-2-ketobutyrate (HMKB). In the reductase reaction, this 2-ketoacid undergoes a metal-dependent reduction by NADPH to yield (R)-2,3-dihydroxy-isovalerate. This chain is Ketol-acid reductoisomerase (NADP(+)), found in Helicobacter pylori (strain Shi470).